The sequence spans 193 residues: dTTP/UTP pyrophosphatase (193 aa).

The active-site Proton acceptor is D73.

It belongs to the Maf family. YhdE subfamily. It depends on a divalent metal cation as a cofactor.

Its subcellular location is the cytoplasm. The catalysed reaction is dTTP + H2O = dTMP + diphosphate + H(+). It carries out the reaction UTP + H2O = UMP + diphosphate + H(+). Its function is as follows. Nucleoside triphosphate pyrophosphatase that hydrolyzes dTTP and UTP. May have a dual role in cell division arrest and in preventing the incorporation of modified nucleotides into cellular nucleic acids. The chain is dTTP/UTP pyrophosphatase from Caulobacter vibrioides (strain ATCC 19089 / CIP 103742 / CB 15) (Caulobacter crescentus).